The sequence spans 365 residues: MTDSQQSKPKHVMMMAAGTGGHVFPALAVAKQLQQQGCQVSWLATPTGMENRLLKDQNIPIYQIDIQGVRGNGVIRKLAAPFKILKATFSAMRYMKQLKVDAVAGFGGYVAGPGGLAARLLGIPVLIHEQNAVAGFTNAQLSRVAKVVCEAFPNTFPASEKVVTTGNPVRREITDILSPKWRYDEREQADKPLNILIVGGSLGAKALNERLPPALKQLEVPLNIFHQCGQQQVEATQALYADAPANLTIQVLPFIEDMAKAYSEADLIICRAGALTVTEVATAGVAAVFVPLPIAVDDHQTANAKFLADIGAAKICQQSTMTPEVLNQLFTTLMNRQLLTEMAVKARQHAQPNATQHVVDLIQKM.

UDP-N-acetyl-alpha-D-glucosamine-binding positions include 19 to 21 (TGG), N131, R170, S201, I255, 274 to 279 (ALTVTE), and Q300.

It belongs to the glycosyltransferase 28 family. MurG subfamily.

The protein resides in the cell inner membrane. It carries out the reaction di-trans,octa-cis-undecaprenyl diphospho-N-acetyl-alpha-D-muramoyl-L-alanyl-D-glutamyl-meso-2,6-diaminopimeloyl-D-alanyl-D-alanine + UDP-N-acetyl-alpha-D-glucosamine = di-trans,octa-cis-undecaprenyl diphospho-[N-acetyl-alpha-D-glucosaminyl-(1-&gt;4)]-N-acetyl-alpha-D-muramoyl-L-alanyl-D-glutamyl-meso-2,6-diaminopimeloyl-D-alanyl-D-alanine + UDP + H(+). It participates in cell wall biogenesis; peptidoglycan biosynthesis. Its function is as follows. Cell wall formation. Catalyzes the transfer of a GlcNAc subunit on undecaprenyl-pyrophosphoryl-MurNAc-pentapeptide (lipid intermediate I) to form undecaprenyl-pyrophosphoryl-MurNAc-(pentapeptide)GlcNAc (lipid intermediate II). The sequence is that of UDP-N-acetylglucosamine--N-acetylmuramyl-(pentapeptide) pyrophosphoryl-undecaprenol N-acetylglucosamine transferase from Acinetobacter baumannii (strain ATCC 17978 / DSM 105126 / CIP 53.77 / LMG 1025 / NCDC KC755 / 5377).